The primary structure comprises 435 residues: Glutamine synthetase (435 aa).

Positions 12–94 (KSIKYFMISY…VAADCVMDDR (83 aa)) constitute a GS beta-grasp domain. The 336-residue stretch at 100–435 (PRVVLKRLVA…QWERDSTLDI (336 aa)) folds into the GS catalytic domain. The Mg(2+) site is built by E123, E125, E180, and E187. L-glutamate is bound at residue G232. H236 serves as a coordination point for Mg(2+). Position 240 (S240) interacts with ATP. 2 residues coordinate L-glutamate: R291 and R315. Residues R315 and R320 each contribute to the ATP site. Residue E328 participates in Mg(2+) binding. R330 lines the L-glutamate pocket.

This sequence belongs to the glutamine synthetase family. Homooctamer. Mg(2+) serves as cofactor.

It catalyses the reaction L-glutamate + NH4(+) + ATP = L-glutamine + ADP + phosphate + H(+). Catalyzes the ATP-dependent biosynthesis of glutamine from glutamate and ammonia. In Rhizobium leguminosarum bv. phaseoli, this protein is Glutamine synthetase.